The primary structure comprises 499 residues: BTB/POZ domain-containing protein At5g60050 (499 aa).

Low complexity predominate over residues Pro18 to Pro30. The interval Pro18–Thr57 is disordered. Pro residues predominate over residues Pro38–Asn49. In terms of domain architecture, BTB spans Gly99–Leu172.

It functions in the pathway protein modification; protein ubiquitination. Functionally, may act as a substrate-specific adapter of an E3 ubiquitin-protein ligase complex (CUL3-RBX1-BTB) which mediates the ubiquitination and subsequent proteasomal degradation of target proteins. The chain is BTB/POZ domain-containing protein At5g60050 from Arabidopsis thaliana (Mouse-ear cress).